The primary structure comprises 1081 residues: uncharacterized protein (1081 aa).

Coiled coils occupy residues 18 to 131 (AIEE…FEEN) and 173 to 242 (NHDE…NDDK). The span at 22–53 (NNKNREIQEKRQKETKDRNDRMVQNQKDRKEM) shows a compositional bias: basic and acidic residues. The disordered stretch occupies residues 22–60 (NNKNREIQEKRQKETKDRNDRMVQNQKDRKEMIGLTNEK). 2 disordered regions span residues 250 to 321 (TDDE…KPGI) and 388 to 1081 (QEPK…GNDE). The segment covering 267-283 (TPTPTPTPTPTPTPTPT) has biased composition (pro residues). 2 stretches are compositionally biased toward low complexity: residues 284–313 (PTTT…KTST) and 396–410 (NNQS…QAGD). Basic and acidic residues predominate over residues 411–421 (DQNKNQNRDEN). Low complexity-rich tracts occupy residues 422–568 (NQGG…NNQE), 576–602 (NQDG…GGEN), 614–623 (GENNQDGGEN), 633–644 (DGENNQDGGENN), 662–672 (GENNQDGGENN), and 680–733 (QDGG…NNQD). Acidic residues-rich tracts occupy residues 748-768 (GGED…DNQD), 778-832 (NNQD…DENN), and 840-854 (QDGD…DENN). Composition is skewed to low complexity over residues 855 to 869 (NQDG…GENN) and 877 to 888 (NQDGGENNQDGE). A compositionally biased stretch (acidic residues) spans 889–954 (NNQDGDENNN…GDENNQDGDE (66 aa)). Low complexity-rich tracts occupy residues 955-975 (NNQG…GGDE), 983-1026 (ENNQ…GGDE), and 1034-1081 (GENN…GNDE).

This is an uncharacterized protein from Dictyostelium discoideum (Social amoeba).